The sequence spans 684 residues: Dixin (684 aa).

The 108-residue stretch at 20 to 127 (EQQLQAYVAW…LVLALAAHFK (108 aa)) folds into the Calponin-homology (CH) domain. The actin-binding stretch occupies residues 127-300 (KPGSSRTVSQ…LEKEMEEAKK (174 aa)). The residue at position 186 (Ser186) is a Phosphoserine. The tract at residues 207 to 235 (GQQRSPSESSCSSLTSPSPIHSAKSESII) is disordered. Residues 211 to 228 (SPSESSCSSLTSPSPIHS) show a composition bias toward low complexity. Ser231 bears the Phosphoserine mark. 2 coiled-coil regions span residues 277-308 (EATWEEQLLEQQEHLEKEMEEAKKMISGLQAL) and 336-461 (LIII…LERE). A disordered region spans residues 560–597 (KKQERKVRGRSPRNQASSEYRASWPPNSTLPHSQSSPA). The segment covering 571–597 (PRNQASSEYRASWPPNSTLPHSQSSPA) has biased composition (polar residues). Residue Ser592 is modified to Phosphoserine. The 81-residue stretch at 602–682 (CTKVLYFTDR…KIVAWVEDHR (81 aa)) folds into the DIX domain.

Belongs to the DIXDC1 family. As to quaternary structure, may bind filamentous actin. Interacts with the complex composed of DVL2 and Rac. Interacts with AXIN1; competes with MAP3K1. Interacts with MAP3K4 preventing MAP3K4 interaction with AXIN1. Directly interacts (via DIX domain) with DVL2 (via DIX domain). Interacts with gamma-tubulin. In terms of processing, phosphorylated on tyrosine and serine residues. Post-translationally, polyubiquitinated, leading to its proteasomal degradation. WNT3A signaling increases DIXDC1 protein levels by inhibiting its ubiquitination and subsequent degradation.

The protein resides in the cell junction. It is found in the focal adhesion. It localises to the cytoplasm. The protein localises to the cytoskeleton. Its subcellular location is the stress fiber. Its function is as follows. Positive effector of the Wnt signaling pathway; activates WNT3A signaling via DVL2. Regulates JNK activation by AXIN1 and DVL2. The protein is Dixin (Dixdc1) of Rattus norvegicus (Rat).